Consider the following 137-residue polypeptide: Large ribosomal subunit protein eL28 (137 aa).

Serine 2 carries the N-acetylserine modification. Residues lysine 58 and lysine 65 each participate in a glycyl lysine isopeptide (Lys-Gly) (interchain with G-Cter in SUMO2) cross-link. Serine 115 bears the Phosphoserine mark.

This sequence belongs to the eukaryotic ribosomal protein eL28 family. In terms of assembly, component of the large ribosomal subunit.

Its subcellular location is the cytoplasm. Its function is as follows. Component of the large ribosomal subunit. The ribosome is a large ribonucleoprotein complex responsible for the synthesis of proteins in the cell. The protein is Large ribosomal subunit protein eL28 (Rpl28) of Rattus norvegicus (Rat).